The sequence spans 196 residues: GTP cyclohydrolase-2 (196 aa).

Residue 49 to 53 participates in GTP binding; sequence RIHSE. 3 residues coordinate Zn(2+): Cys-54, Cys-65, and Cys-67. GTP-binding positions include Gln-70, 92-94, and Thr-114; that span reads EGR. The active-site Proton acceptor is Asp-126. Arg-128 serves as the catalytic Nucleophile. Positions 149 and 154 each coordinate GTP.

It belongs to the GTP cyclohydrolase II family. Homodimer. Requires Zn(2+) as cofactor.

The catalysed reaction is GTP + 4 H2O = 2,5-diamino-6-hydroxy-4-(5-phosphoribosylamino)-pyrimidine + formate + 2 phosphate + 3 H(+). It participates in cofactor biosynthesis; riboflavin biosynthesis; 5-amino-6-(D-ribitylamino)uracil from GTP: step 1/4. Functionally, catalyzes the conversion of GTP to 2,5-diamino-6-ribosylamino-4(3H)-pyrimidinone 5'-phosphate (DARP), formate and pyrophosphate. The sequence is that of GTP cyclohydrolase-2 from Hamiltonella defensa subsp. Acyrthosiphon pisum (strain 5AT).